Here is a 321-residue protein sequence, read N- to C-terminus: Glycerol-3-phosphate phosphatase (321 aa).

Asp34 (nucleophile) is an active-site residue. Positions 34, 36, and 260 each coordinate Mg(2+). Asp36 acts as the Proton donor in catalysis.

This sequence belongs to the HAD-like hydrolase superfamily. CbbY/CbbZ/Gph/YieH family. In terms of assembly, homodimer. Mg(2+) serves as cofactor. In terms of tissue distribution, detected in all tissues including red cells, lymphocytes and cultured fibroblasts (at protein level). The highest activities occur in skeletal muscle and cardiac muscle.

It catalyses the reaction O-phospho-L-tyrosyl-[protein] + H2O = L-tyrosyl-[protein] + phosphate. It carries out the reaction sn-glycerol 1-phosphate + H2O = glycerol + phosphate. The enzyme catalyses sn-glycerol 3-phosphate + H2O = glycerol + phosphate. In terms of biological role, glycerol-3-phosphate phosphatase hydrolyzing glycerol-3-phosphate into glycerol. Thereby, regulates the cellular levels of glycerol-3-phosphate a metabolic intermediate of glucose, lipid and energy metabolism. Was also shown to have a 2-phosphoglycolate phosphatase activity and a tyrosine-protein phosphatase activity. However, their physiological relevance is unclear. In vitro, also has a phosphatase activity toward ADP, ATP, GDP and GTP. The sequence is that of Glycerol-3-phosphate phosphatase from Homo sapiens (Human).